The following is a 407-amino-acid chain: Putative F-box protein At2g16220 (407 aa).

An F-box domain is found at 1–45 (MNSHFLTNDLILEVLSRLPLKSVARFHCVSKRWASMFGSPYFKEL). A disordered region spans residues 385–407 (PPSVQPEYDESDSESEEDREIII). A compositionally biased stretch (acidic residues) spans 391–407 (EYDESDSESEEDREIII).

This chain is Putative F-box protein At2g16220, found in Arabidopsis thaliana (Mouse-ear cress).